The primary structure comprises 100 residues: Urease subunit gamma (100 aa).

This sequence belongs to the urease gamma subunit family. As to quaternary structure, heterotrimer of UreA (gamma), UreB (beta) and UreC (alpha) subunits. Three heterotrimers associate to form the active enzyme.

The protein localises to the cytoplasm. The enzyme catalyses urea + 2 H2O + H(+) = hydrogencarbonate + 2 NH4(+). It participates in nitrogen metabolism; urea degradation; CO(2) and NH(3) from urea (urease route): step 1/1. This Haemophilus influenzae (strain PittEE) protein is Urease subunit gamma.